Here is a 158-residue protein sequence, read N- to C-terminus: NAD(P)H-quinone oxidoreductase subunit J, chloroplastic (158 aa).

It belongs to the complex I 30 kDa subunit family. As to quaternary structure, NDH is composed of at least 16 different subunits, 5 of which are encoded in the nucleus.

It is found in the plastid. It localises to the chloroplast thylakoid membrane. The catalysed reaction is a plastoquinone + NADH + (n+1) H(+)(in) = a plastoquinol + NAD(+) + n H(+)(out). It carries out the reaction a plastoquinone + NADPH + (n+1) H(+)(in) = a plastoquinol + NADP(+) + n H(+)(out). Its function is as follows. NDH shuttles electrons from NAD(P)H:plastoquinone, via FMN and iron-sulfur (Fe-S) centers, to quinones in the photosynthetic chain and possibly in a chloroplast respiratory chain. The immediate electron acceptor for the enzyme in this species is believed to be plastoquinone. Couples the redox reaction to proton translocation, and thus conserves the redox energy in a proton gradient. The polypeptide is NAD(P)H-quinone oxidoreductase subunit J, chloroplastic (Lactuca sativa (Garden lettuce)).